A 194-amino-acid chain; its full sequence is Leucyl/phenylalanyl-tRNA--protein transferase (194 aa).

This sequence belongs to the L/F-transferase family.

It is found in the cytoplasm. The catalysed reaction is N-terminal L-lysyl-[protein] + L-leucyl-tRNA(Leu) = N-terminal L-leucyl-L-lysyl-[protein] + tRNA(Leu) + H(+). It carries out the reaction N-terminal L-arginyl-[protein] + L-leucyl-tRNA(Leu) = N-terminal L-leucyl-L-arginyl-[protein] + tRNA(Leu) + H(+). It catalyses the reaction L-phenylalanyl-tRNA(Phe) + an N-terminal L-alpha-aminoacyl-[protein] = an N-terminal L-phenylalanyl-L-alpha-aminoacyl-[protein] + tRNA(Phe). Functions in the N-end rule pathway of protein degradation where it conjugates Leu, Phe and, less efficiently, Met from aminoacyl-tRNAs to the N-termini of proteins containing an N-terminal arginine or lysine. The polypeptide is Leucyl/phenylalanyl-tRNA--protein transferase (Chlorobium luteolum (strain DSM 273 / BCRC 81028 / 2530) (Pelodictyon luteolum)).